A 262-amino-acid chain; its full sequence is Ornithine carbamoyltransferase (262 aa).

Carbamoyl phosphate is bound by residues 3-7, Gln30, Arg54, and 81-84; these read STRTR and HPTQ. L-ornithine contacts are provided by residues Asn114, Asp178, and 182–183; that span reads SM. Carbamoyl phosphate contacts are provided by residues 219–222 and Thr247; that span reads HCLP.

The protein belongs to the aspartate/ornithine carbamoyltransferase superfamily. OTCase family.

The protein localises to the cytoplasm. The catalysed reaction is carbamoyl phosphate + L-ornithine = L-citrulline + phosphate + H(+). It functions in the pathway amino-acid biosynthesis; L-arginine biosynthesis; L-arginine from L-ornithine and carbamoyl phosphate: step 1/3. Its pathway is amino-acid degradation; L-arginine degradation via ADI pathway; carbamoyl phosphate from L-arginine: step 2/2. Its function is as follows. Reversibly catalyzes the transfer of the carbamoyl group from carbamoyl phosphate (CP) to the N(epsilon) atom of ornithine (ORN) to produce L-citrulline. The protein is Ornithine carbamoyltransferase (argF) of Neisseria meningitidis.